The primary structure comprises 190 residues: Holliday junction branch migration complex subunit RuvA (190 aa).

Residues 1-64 (MIGRITGTLI…EDAQLLYGFG (64 aa)) form a domain I region. The tract at residues 65-137 (SSAERSTFRE…MRGKLGADIG (73 aa)) is domain II. Positions 137–141 (GATPH) are flexible linker. Positions 142 to 190 (AAGGHQSDILNALLALGYSDKESQAALKKLPEGVDVSEGIRLALKALVR) are domain III.

This sequence belongs to the RuvA family. Homotetramer. Forms an RuvA(8)-RuvB(12)-Holliday junction (HJ) complex. HJ DNA is sandwiched between 2 RuvA tetramers; dsDNA enters through RuvA and exits via RuvB. An RuvB hexamer assembles on each DNA strand where it exits the tetramer. Each RuvB hexamer is contacted by two RuvA subunits (via domain III) on 2 adjacent RuvB subunits; this complex drives branch migration. In the full resolvosome a probable DNA-RuvA(4)-RuvB(12)-RuvC(2) complex forms which resolves the HJ.

The protein resides in the cytoplasm. The RuvA-RuvB-RuvC complex processes Holliday junction (HJ) DNA during genetic recombination and DNA repair, while the RuvA-RuvB complex plays an important role in the rescue of blocked DNA replication forks via replication fork reversal (RFR). RuvA specifically binds to HJ cruciform DNA, conferring on it an open structure. The RuvB hexamer acts as an ATP-dependent pump, pulling dsDNA into and through the RuvAB complex. HJ branch migration allows RuvC to scan DNA until it finds its consensus sequence, where it cleaves and resolves the cruciform DNA. The chain is Holliday junction branch migration complex subunit RuvA from Bordetella parapertussis (strain 12822 / ATCC BAA-587 / NCTC 13253).